Reading from the N-terminus, the 360-residue chain is Isocitrate dehydrogenase [NAD] regulatory subunit B, mitochondrial (360 aa).

A mitochondrion-targeting transit peptide spans 1-113; that stretch reads MLGRLRTVVK…MELRKALDLY (113 aa). 4 residues coordinate substrate: serine 101, asparagine 103, arginine 107, and arginine 140. Aspartate 227 lines the Mg(2+) pocket. NADP(+) contacts are provided by residues 284–290 and asparagine 297; that span reads HHVAADI.

It belongs to the isocitrate and isopropylmalate dehydrogenases family. Heterooligomer of catalytic and regulatory subunits. It depends on Mg(2+) as a cofactor. Mn(2+) is required as a cofactor.

The protein resides in the mitochondrion. It catalyses the reaction D-threo-isocitrate + NAD(+) = 2-oxoglutarate + CO2 + NADH. Functionally, performs an essential role in the oxidative function of the citric acid cycle. The chain is Isocitrate dehydrogenase [NAD] regulatory subunit B, mitochondrial (idhB) from Dictyostelium discoideum (Social amoeba).